Here is a 73-residue protein sequence, read N- to C-terminus: Large ribosomal subunit protein bL31 (73 aa).

The protein belongs to the bacterial ribosomal protein bL31 family. Type A subfamily. In terms of assembly, part of the 50S ribosomal subunit.

Functionally, binds the 23S rRNA. The chain is Large ribosomal subunit protein bL31 from Allorhizobium ampelinum (strain ATCC BAA-846 / DSM 112012 / S4) (Agrobacterium vitis (strain S4)).